Consider the following 167-residue polypeptide: Shikimate kinase (167 aa).

12–17 (GSGKTT) is an ATP binding site. Residue Thr16 coordinates Mg(2+). Substrate contacts are provided by Asp34, Arg58, and Gly80. Arg117 lines the ATP pocket. Arg135 serves as a coordination point for substrate. Arg152 is an ATP binding site.

Belongs to the shikimate kinase family. Monomer. Requires Mg(2+) as cofactor.

It is found in the cytoplasm. The catalysed reaction is shikimate + ATP = 3-phosphoshikimate + ADP + H(+). Its pathway is metabolic intermediate biosynthesis; chorismate biosynthesis; chorismate from D-erythrose 4-phosphate and phosphoenolpyruvate: step 5/7. Functionally, catalyzes the specific phosphorylation of the 3-hydroxyl group of shikimic acid using ATP as a cosubstrate. This is Shikimate kinase from Salinispora tropica (strain ATCC BAA-916 / DSM 44818 / JCM 13857 / NBRC 105044 / CNB-440).